The following is a 379-amino-acid chain: tRNA (guanine(26)-N(2))-dimethyltransferase (379 aa).

Residues valine 4–leucine 375 enclose the Trm1 methyltransferase domain. S-adenosyl-L-methionine contacts are provided by arginine 36, arginine 61, aspartate 78, aspartate 120, and alanine 121.

It belongs to the class I-like SAM-binding methyltransferase superfamily. Trm1 family.

The catalysed reaction is guanosine(26) in tRNA + 2 S-adenosyl-L-methionine = N(2)-dimethylguanosine(26) in tRNA + 2 S-adenosyl-L-homocysteine + 2 H(+). In terms of biological role, dimethylates a single guanine residue at position 26 of a number of tRNAs using S-adenosyl-L-methionine as donor of the methyl groups. The chain is tRNA (guanine(26)-N(2))-dimethyltransferase from Pyrococcus abyssi (strain GE5 / Orsay).